Here is a 675-residue protein sequence, read N- to C-terminus: Heat shock 70 kDa protein, mitochondrial (675 aa).

A mitochondrion-targeting transit peptide spans 1–52 (MAATLLRSLQRRNLSSSSVSAFRSLTGSTKTSYATHKLASLTRPFSSRPAGN). The disordered stretch occupies residues 639 to 675 (VSKIGQHMSGGSSGGPSEGGSQGGEQAPEAEYEEVKK). The segment covering 649 to 661 (GSSGGPSEGGSQG) has biased composition (gly residues). The segment covering 666-675 (PEAEYEEVKK) has biased composition (acidic residues).

The protein belongs to the heat shock protein 70 family.

The protein resides in the mitochondrion. The sequence is that of Heat shock 70 kDa protein, mitochondrial (HSP1) from Pisum sativum (Garden pea).